A 379-amino-acid chain; its full sequence is Glutamate 5-kinase (379 aa).

Lys-8 is an ATP binding site. Ser-49, Asp-136, and Asn-148 together coordinate substrate. ATP-binding positions include 168-169 (TD) and 211-217 (TGGMATK). In terms of domain architecture, PUA spans 276 to 354 (MGKIYLDAGA…ERIASLLGYM (79 aa)).

It belongs to the glutamate 5-kinase family.

Its subcellular location is the cytoplasm. The catalysed reaction is L-glutamate + ATP = L-glutamyl 5-phosphate + ADP. Its pathway is amino-acid biosynthesis; L-proline biosynthesis; L-glutamate 5-semialdehyde from L-glutamate: step 1/2. In terms of biological role, catalyzes the transfer of a phosphate group to glutamate to form L-glutamate 5-phosphate. The protein is Glutamate 5-kinase of Microcystis aeruginosa (strain NIES-843 / IAM M-2473).